Reading from the N-terminus, the 518-residue chain is U-box domain-containing protein 57 (518 aa).

Positions 86–142 (EEVRKVHILEEEIVTLKHQADTYLVQKEKAVTAYDQLKHERDNAVQQVNELRDQSTH) form a coiled coil. One can recognise a Protein kinase domain in the interval 159-409 (FKNAREVGDT…RPDLLNEVWI (251 aa)). The region spanning 434–508 (SVPAAFICPI…HGYLQQQQPN (75 aa)) is the U-box domain.

It carries out the reaction S-ubiquitinyl-[E2 ubiquitin-conjugating enzyme]-L-cysteine + [acceptor protein]-L-lysine = [E2 ubiquitin-conjugating enzyme]-L-cysteine + N(6)-ubiquitinyl-[acceptor protein]-L-lysine.. It functions in the pathway protein modification; protein ubiquitination. Possesses E3 ubiquitin-protein ligase in vitro. May be involved in cell death signaling. The protein is U-box domain-containing protein 57 (PUB57) of Oryza sativa subsp. japonica (Rice).